The sequence spans 353 residues: 3-isopropylmalate dehydrogenase (353 aa).

Residues R97, R107, R135, and D219 each contribute to the substrate site. Mg(2+)-binding residues include D219, D243, and D247.

It belongs to the isocitrate and isopropylmalate dehydrogenases family. LeuB type 1 subfamily. Homodimer. It depends on Mg(2+) as a cofactor. Mn(2+) serves as cofactor.

The protein localises to the cytoplasm. It catalyses the reaction (2R,3S)-3-isopropylmalate + NAD(+) = 4-methyl-2-oxopentanoate + CO2 + NADH. The protein operates within amino-acid biosynthesis; L-leucine biosynthesis; L-leucine from 3-methyl-2-oxobutanoate: step 3/4. Functionally, catalyzes the oxidation of 3-carboxy-2-hydroxy-4-methylpentanoate (3-isopropylmalate) to 3-carboxy-4-methyl-2-oxopentanoate. The product decarboxylates to 4-methyl-2 oxopentanoate. This is 3-isopropylmalate dehydrogenase from Bacteroides fragilis (strain ATCC 25285 / DSM 2151 / CCUG 4856 / JCM 11019 / LMG 10263 / NCTC 9343 / Onslow / VPI 2553 / EN-2).